The following is a 687-amino-acid chain: Putative metabolite transport protein YDL199C (687 aa).

The segment at 1 to 22 is disordered; the sequence is MKPPLNMSRSNKPLTQEANSSA. Residues 1-122 lie on the Extracellular side of the membrane; it reads MKPPLNMSRS…RHSSRVLRTS (122 aa). A compositionally biased stretch (polar residues) spans 7–22; the sequence is MSRSNKPLTQEANSSA. Position 90 is a phosphoserine (Ser90). The helical transmembrane segment at 123 to 143 threads the bilayer; sequence FISFVVLVSSLSGLDQGLISG. Over 144–164 the chain is Cytoplasmic; that stretch reads NVMTLSFQKYFHYPLTSPLGN. The helical transmembrane segment at 165-185 threads the bilayer; sequence IVSIVNLGAFMASLFVYSGIL. Residues 186-192 lie on the Extracellular side of the membrane; it reads EPCSRKK. Residues 193–213 form a helical membrane-spanning segment; sequence MLQISTMIYSLGAIVQVLALN. At 214–216 the chain is on the cytoplasmic side; it reads QWC. A helical membrane pass occupies residues 217–237; sequence LLLGRFLLGVGMGFAFSMVII. Topologically, residues 238–251 are extracellular; that stretch reads YQFEFPLPCIRKRT. Residues 252-272 form a helical membrane-spanning segment; sequence LISIQCVSSVIAYSFGIWINC. The Cytoplasmic segment spans residues 273-283; sequence AFRYLGFAWRY. Residues 284-304 traverse the membrane as a helical segment; sequence PLSTHVALGIILNLMSFYLIL. The Extracellular portion of the chain corresponds to 305-410; sequence ESPSWLLKQK…MGRGERKSIY (106 aa). The helical transmembrane segment at 411–431 threads the bilayer; it reads LTGLNALIYSIVILAYVPLVL. Over 432–439 the chain is Cytoplasmic; it reads RKRKEKTN. The chain crosses the membrane as a helical span at residues 440-460; it reads VLLGSIVMCALLFTISFTDWF. The Extracellular segment spans residues 461–469; that stretch reads PKSTTRYIS. Residues 470–490 form a helical membrane-spanning segment; it reads ILFAVFLFTHFISWDSIGWVM. The Cytoplasmic segment spans residues 491-500; sequence TIELLPHLSQ. The helical transmembrane segment at 501-521 threads the bilayer; sequence APVILLVSNFYWIFKWFVSLI. Residues 522–533 are Extracellular-facing; the sequence is TPILIDRLSWKF. The chain crosses the membrane as a helical span at residues 534 to 554; it reads YLIPSLSSFISIIFVLKIFPI. Residues 555–687 lie on the Cytoplasmic side of the membrane; that stretch reads ETRDERLDSD…QNSPGDMAVA (133 aa). Disordered stretches follow at residues 561–587 and 654–687; these read LDSD…SEFS and SFHN…MAVA. Residues 660-673 are compositionally biased toward polar residues; that stretch reads DPNISDNIAANKPS.

The protein belongs to the major facilitator superfamily. Sugar transporter (TC 2.A.1.1) family.

Its subcellular location is the membrane. The protein is Putative metabolite transport protein YDL199C of Saccharomyces cerevisiae (strain ATCC 204508 / S288c) (Baker's yeast).